The primary structure comprises 1035 residues: DNA polymerase I B, mitochondrial (1035 aa).

Residues 1 to 42 (MAVAPPLPPAPARLLRRWQGSSPWLSSSFGRTRYFSRPAFAA) constitute a mitochondrion transit peptide. The segment at 100–124 (TNGTTPLRVGNLRHDPSEDIRSSNY) is disordered. The span at 111-120 (LRHDPSEDIR) shows a compositional bias: basic and acidic residues. Residues 317–478 (FGNGKTCIWV…LYESLKNKLE (162 aa)) form the 3'-5' exonuclease domain. The tract at residues 699–1032 (HAIAALCEVF…VDAKYAKSWY (334 aa)) is polymerase.

This sequence belongs to the DNA polymerase type-A family.

Its subcellular location is the mitochondrion. It carries out the reaction DNA(n) + a 2'-deoxyribonucleoside 5'-triphosphate = DNA(n+1) + diphosphate. Not inhibited by aphidicolin. In addition to polymerase activity, this DNA polymerase exhibits 5'-3' exonuclease activity. May be required for DNA replication and accumulation in mitochondria. This is DNA polymerase I B, mitochondrial from Oryza sativa subsp. japonica (Rice).